We begin with the raw amino-acid sequence, 226 residues long: V-type proton ATPase subunit E (226 aa).

The protein belongs to the V-ATPase E subunit family. As to quaternary structure, V-ATPase is a heteromultimeric enzyme composed of a peripheral catalytic V1 complex (components A to H) attached to an integral membrane V0 proton pore complex (components: a, c, c', c'' and d).

Its function is as follows. Subunit of the peripheral V1 complex of vacuolar ATPase essential for assembly or catalytic function. V-ATPase is responsible for acidifying a variety of intracellular compartments in eukaryotic cells. The sequence is that of V-type proton ATPase subunit E (VATE) from Mesembryanthemum crystallinum (Common ice plant).